The primary structure comprises 359 residues: NAC transcription factor 47 (359 aa).

Residues 10–186 (LPPGFRFHPT…DWVLCRIYKK (177 aa)) form the NAC domain. A DNA-binding region spans residues 112–192 (IGIKKALVFY…IYKKSHASLS (81 aa)). Disordered regions lie at residues 147–166 (KRIN…FGDR) and 200–226 (TSNQ…LQND). A compositionally biased stretch (polar residues) spans 148-165 (RINSSRSGGSEVNNNFGD).

It is found in the nucleus. Transcription factor that binds to the promoter of ACO5, an ACC oxidase involved in ethylene biosynthesis. Mediates waterlogging-induced hyponastic leaf movement, and cell expansion in abaxial cells of the basal petiole region, by directly regulating the expression of ACO5. Required for normal seed development and morphology. This Arabidopsis thaliana (Mouse-ear cress) protein is NAC transcription factor 47.